The following is a 310-amino-acid chain: Glutaminase 1 (310 aa).

7 residues coordinate substrate: serine 66, asparagine 117, glutamate 161, asparagine 168, tyrosine 192, tyrosine 244, and valine 262. Lysine 294 bears the N6-acetyllysine mark.

The protein belongs to the glutaminase family. As to quaternary structure, homotetramer.

It carries out the reaction L-glutamine + H2O = L-glutamate + NH4(+). In Escherichia coli O157:H7, this protein is Glutaminase 1.